We begin with the raw amino-acid sequence, 364 residues long: Aminomethyltransferase (364 aa).

Belongs to the GcvT family. The glycine cleavage system is composed of four proteins: P, T, L and H.

It catalyses the reaction N(6)-[(R)-S(8)-aminomethyldihydrolipoyl]-L-lysyl-[protein] + (6S)-5,6,7,8-tetrahydrofolate = N(6)-[(R)-dihydrolipoyl]-L-lysyl-[protein] + (6R)-5,10-methylene-5,6,7,8-tetrahydrofolate + NH4(+). Functionally, the glycine cleavage system catalyzes the degradation of glycine. The protein is Aminomethyltransferase of Shewanella sediminis (strain HAW-EB3).